Here is a 225-residue protein sequence, read N- to C-terminus: ATP-dependent dethiobiotin synthetase BioD (225 aa).

An ATP-binding site is contributed by 12–17 (EIGKTY). Residue threonine 16 participates in Mg(2+) binding. Lysine 37 is a catalytic residue. A substrate-binding site is contributed by serine 41. Residues aspartate 55, 122 to 125 (EGVG), and 182 to 183 (SE) each bind ATP. Residues aspartate 55 and glutamate 122 each contribute to the Mg(2+) site.

It belongs to the dethiobiotin synthetase family. Homodimer. It depends on Mg(2+) as a cofactor.

It localises to the cytoplasm. It catalyses the reaction (7R,8S)-7,8-diammoniononanoate + CO2 + ATP = (4R,5S)-dethiobiotin + ADP + phosphate + 3 H(+). It participates in cofactor biosynthesis; biotin biosynthesis; biotin from 7,8-diaminononanoate: step 1/2. Functionally, catalyzes a mechanistically unusual reaction, the ATP-dependent insertion of CO2 between the N7 and N8 nitrogen atoms of 7,8-diaminopelargonic acid (DAPA, also called 7,8-diammoniononanoate) to form a ureido ring. The polypeptide is ATP-dependent dethiobiotin synthetase BioD (Methylobacterium nodulans (strain LMG 21967 / CNCM I-2342 / ORS 2060)).